We begin with the raw amino-acid sequence, 453 residues long: Chromosomal replication initiator protein DnaA (453 aa).

The interval 1 to 74 (MKEKQFWNRI…GFEIYDAEIT (74 aa)) is domain I, interacts with DnaA modulators. The interval 74–113 (TPHYIFTKPQDTTSSQVEEATNLTLYDYSPKLVSIPYSDT) is domain II. The domain III, AAA+ region stretch occupies residues 114-331 (GLKEKYTFDN…GAINDITLIA (218 aa)). Gly158, Gly160, Lys161, and Thr162 together coordinate ATP. A domain IV, binds dsDNA region spans residues 332–453 (RVKKIKDITI…EIESIKKKIK (122 aa)).

Belongs to the DnaA family. Oligomerizes as a right-handed, spiral filament on DNA at oriC. Interacts (via domains I and III) with CcrZ.

The protein localises to the cytoplasm. With respect to regulation, ccrZ stimulates DnaA, possibly by phosphorylation of an intermediate molecule, to initiate DNA replication. Plays an essential role in the initiation and regulation of chromosomal replication. ATP-DnaA binds to the origin of replication (oriC) to initiate formation of the DNA replication initiation complex once per cell cycle. Binds the DnaA box (a 9 base pair repeat at the origin) and separates the double-stranded (ds)DNA. Forms a right-handed helical filament on oriC DNA; dsDNA binds to the exterior of the filament while single-stranded (ss)DNA is stabiized in the filament's interior. The ATP-DnaA-oriC complex binds and stabilizes one strand of the AT-rich DNA unwinding element (DUE), permitting loading of DNA polymerase. After initiation quickly degrades to an ADP-DnaA complex that is not apt for DNA replication. Binds acidic phospholipids. Functionally, mutations in this gene suppress a deletion of cell cycle regulator ccrZ. This chain is Chromosomal replication initiator protein DnaA, found in Streptococcus pneumoniae serotype 2 (strain D39 / NCTC 7466).